The chain runs to 399 residues: Dual-specificity RNA methyltransferase RlmN (399 aa).

Glu121 acts as the Proton acceptor in catalysis. Residues 127–376 (DVDRGTLCVS…VRTPRGRDIL (250 aa)) form the Radical SAM core domain. Cysteines 134 and 379 form a disulfide. Residues Cys141, Cys145, and Cys148 each coordinate [4Fe-4S] cluster. S-adenosyl-L-methionine contacts are provided by residues 205 to 206 (GE), Ser237, 259 to 261 (SLH), and Asn336. The S-methylcysteine intermediate role is filled by Cys379.

It belongs to the radical SAM superfamily. RlmN family. [4Fe-4S] cluster serves as cofactor.

The protein resides in the cytoplasm. It catalyses the reaction adenosine(2503) in 23S rRNA + 2 reduced [2Fe-2S]-[ferredoxin] + 2 S-adenosyl-L-methionine = 2-methyladenosine(2503) in 23S rRNA + 5'-deoxyadenosine + L-methionine + 2 oxidized [2Fe-2S]-[ferredoxin] + S-adenosyl-L-homocysteine. The enzyme catalyses adenosine(37) in tRNA + 2 reduced [2Fe-2S]-[ferredoxin] + 2 S-adenosyl-L-methionine = 2-methyladenosine(37) in tRNA + 5'-deoxyadenosine + L-methionine + 2 oxidized [2Fe-2S]-[ferredoxin] + S-adenosyl-L-homocysteine. Specifically methylates position 2 of adenine 2503 in 23S rRNA and position 2 of adenine 37 in tRNAs. m2A2503 modification seems to play a crucial role in the proofreading step occurring at the peptidyl transferase center and thus would serve to optimize ribosomal fidelity. The polypeptide is Dual-specificity RNA methyltransferase RlmN (Methylocella silvestris (strain DSM 15510 / CIP 108128 / LMG 27833 / NCIMB 13906 / BL2)).